The chain runs to 315 residues: Porphobilinogen deaminase (315 aa).

Cys245 is modified (S-(dipyrrolylmethanemethyl)cysteine).

It belongs to the HMBS family. As to quaternary structure, monomer. The cofactor is dipyrromethane.

The catalysed reaction is 4 porphobilinogen + H2O = hydroxymethylbilane + 4 NH4(+). The protein operates within porphyrin-containing compound metabolism; protoporphyrin-IX biosynthesis; coproporphyrinogen-III from 5-aminolevulinate: step 2/4. It functions in the pathway porphyrin-containing compound metabolism; chlorophyll biosynthesis. Tetrapolymerization of the monopyrrole PBG into the hydroxymethylbilane pre-uroporphyrinogen in several discrete steps. In Prochlorococcus marinus (strain NATL2A), this protein is Porphobilinogen deaminase.